A 75-amino-acid chain; its full sequence is Small capsomere-interacting protein (75 aa).

It belongs to the herpesviridae small capsomere-interacting protein family. Interacts with the major capsid protein/MCP.

Its subcellular location is the virion. It localises to the host nucleus. Its function is as follows. Participates in the assembly of the infectious particles by decorating the outer surface of the capsid shell and thus forming a layer between the capsid and the tegument. Complexes composed of the capsid protein VP5 and UL48A assemble together in the host cytoplasm and are translocated to the nucleus, where they accumulate and participate in capsid assembly. Functionally, participates in the assembly of the infectious particles by decorating the outer surface of the capsid shell and thus forming a layer between the capsid and the tegument. Complexes composed of the major capsid protein and small capsomere-interacting protein/SCP assemble together in the host cytoplasm and are translocated to the nucleus, where they accumulate and participate in capsid assembly. The chain is Small capsomere-interacting protein from Homo sapiens (Human).